The following is a 338-amino-acid chain: Ketol-acid reductoisomerase (NADP(+)) (338 aa).

In terms of domain architecture, KARI N-terminal Rossmann spans 1-181 (MKVYYDKDAD…GGGKAGIIET (181 aa)). NADP(+) is bound by residues 24–27 (YGSQ), arginine 47, and serine 52. Histidine 107 is an active-site residue. Glycine 133 is a binding site for NADP(+). The region spanning 182–327 (NFREETETDL…EKLRAMMPWI (146 aa)) is the KARI C-terminal knotted domain. Mg(2+) is bound by residues aspartate 190, glutamate 194, glutamate 226, and glutamate 230. Position 251 (serine 251) interacts with substrate.

It belongs to the ketol-acid reductoisomerase family. The cofactor is Mg(2+).

It carries out the reaction (2R)-2,3-dihydroxy-3-methylbutanoate + NADP(+) = (2S)-2-acetolactate + NADPH + H(+). The catalysed reaction is (2R,3R)-2,3-dihydroxy-3-methylpentanoate + NADP(+) = (S)-2-ethyl-2-hydroxy-3-oxobutanoate + NADPH + H(+). It participates in amino-acid biosynthesis; L-isoleucine biosynthesis; L-isoleucine from 2-oxobutanoate: step 2/4. The protein operates within amino-acid biosynthesis; L-valine biosynthesis; L-valine from pyruvate: step 2/4. Its function is as follows. Involved in the biosynthesis of branched-chain amino acids (BCAA). Catalyzes an alkyl-migration followed by a ketol-acid reduction of (S)-2-acetolactate (S2AL) to yield (R)-2,3-dihydroxy-isovalerate. In the isomerase reaction, S2AL is rearranged via a Mg-dependent methyl migration to produce 3-hydroxy-3-methyl-2-ketobutyrate (HMKB). In the reductase reaction, this 2-ketoacid undergoes a metal-dependent reduction by NADPH to yield (R)-2,3-dihydroxy-isovalerate. In Variovorax paradoxus (strain S110), this protein is Ketol-acid reductoisomerase (NADP(+)).